A 355-amino-acid chain; its full sequence is Probable butyrate kinase (355 aa).

It belongs to the acetokinase family.

Its subcellular location is the cytoplasm. The enzyme catalyses butanoate + ATP = butanoyl phosphate + ADP. The sequence is that of Probable butyrate kinase from Clostridium botulinum (strain Eklund 17B / Type B).